A 429-amino-acid polypeptide reads, in one-letter code: Glutamate-1-semialdehyde 2,1-aminomutase (429 aa).

Residue Lys267 is modified to N6-(pyridoxal phosphate)lysine.

The protein belongs to the class-III pyridoxal-phosphate-dependent aminotransferase family. HemL subfamily. In terms of assembly, homodimer. Pyridoxal 5'-phosphate serves as cofactor.

It is found in the cytoplasm. The enzyme catalyses (S)-4-amino-5-oxopentanoate = 5-aminolevulinate. It participates in porphyrin-containing compound metabolism; protoporphyrin-IX biosynthesis; 5-aminolevulinate from L-glutamyl-tRNA(Glu): step 2/2. This is Glutamate-1-semialdehyde 2,1-aminomutase from Xanthomonas oryzae pv. oryzae (strain PXO99A).